Reading from the N-terminus, the 332-residue chain is Receptor polysaccharide phosphotransferase WefC (332 aa).

It belongs to the stealth family.

In Streptococcus oralis, this protein is Receptor polysaccharide phosphotransferase WefC (wefC).